The chain runs to 76 residues: Contulakin-G (76 aa).

A signal peptide spans 1–22; sequence MQTAYWVMVMMMVWIAAPLSEG. The propeptide occupies 23–50; the sequence is GKLNDVIRGLVPDDITPQLILGSLISRR. At Gln51 the chain carries Pyrrolidone carboxylic acid. Residues 51-76 form a disordered region; the sequence is QSEEGGSNATKKPYILRASDQVASGP. An O-linked (GalNAc...) threonine glycan is attached at Thr60. The propeptide occupies 67 to 76; it reads RASDQVASGP.

The protein belongs to the conotoxin C superfamily. Post-translationally, O-glycosylated. The glycosylation seems to enhance the affinity to the neurotensin receptors. Expressed by the venom duct.

Its subcellular location is the secreted. Its function is as follows. Acts as an agonist of neurotensin receptors. It binds to human neurotensin type 1 receptor (NTSR1), rat neurotensin types 1 and 2 receptors (NTSR1/NTSR2) and mouse neurotensin type 3 receptor (SORT1). The polypeptide is Contulakin-G (Conus geographus (Geography cone)).